The sequence spans 425 residues: Enolase (425 aa).

Q162 contacts (2R)-2-phosphoglycerate. E204 serves as the catalytic Proton donor. Residues D241, E282, and D309 each coordinate Mg(2+). K334, R363, S364, and K385 together coordinate (2R)-2-phosphoglycerate. The Proton acceptor role is filled by K334.

It belongs to the enolase family. It depends on Mg(2+) as a cofactor.

Its subcellular location is the cytoplasm. The protein localises to the secreted. It localises to the cell surface. It carries out the reaction (2R)-2-phosphoglycerate = phosphoenolpyruvate + H2O. It functions in the pathway carbohydrate degradation; glycolysis; pyruvate from D-glyceraldehyde 3-phosphate: step 4/5. Catalyzes the reversible conversion of 2-phosphoglycerate (2-PG) into phosphoenolpyruvate (PEP). It is essential for the degradation of carbohydrates via glycolysis. The chain is Enolase from Corynebacterium glutamicum (strain R).